The sequence spans 212 residues: Protein HP-25 homolog 1 (212 aa).

A signal peptide spans 1–34; the sequence is MPGGRRRVGSMNIAGFWILAQFVLLLVANVKSSA. The segment at 36–66 is disordered; that stretch reads SELCGPRGARGPPGLSGLPGPPGYTGPIGMP. Over residues 40–53 the composition is skewed to low complexity; the sequence is GPRGARGPPGLSGL. The region spanning 40 to 76 is the Collagen-like domain; the sequence is GPRGARGPPGLSGLPGPPGYTGPIGMPGLTGRPGLPG. The 131-residue stretch at 82–212 folds into the C1q domain; sequence PPLPQSAFSV…VFYGFLLNGN (131 aa). Residue Asn-125 is glycosylated (N-linked (GlcNAc...) asparagine).

It localises to the secreted. The protein is Protein HP-25 homolog 1 of Bos taurus (Bovine).